A 284-amino-acid polypeptide reads, in one-letter code: 4-diphosphocytidyl-2-C-methyl-D-erythritol kinase (284 aa).

K9 is a catalytic residue. An ATP-binding site is contributed by 92 to 102; it reads PMGGGIGGGSS. D134 is an active-site residue.

Belongs to the GHMP kinase family. IspE subfamily.

It catalyses the reaction 4-CDP-2-C-methyl-D-erythritol + ATP = 4-CDP-2-C-methyl-D-erythritol 2-phosphate + ADP + H(+). It functions in the pathway isoprenoid biosynthesis; isopentenyl diphosphate biosynthesis via DXP pathway; isopentenyl diphosphate from 1-deoxy-D-xylulose 5-phosphate: step 3/6. Its function is as follows. Catalyzes the phosphorylation of the position 2 hydroxy group of 4-diphosphocytidyl-2C-methyl-D-erythritol. This Stutzerimonas stutzeri (strain A1501) (Pseudomonas stutzeri) protein is 4-diphosphocytidyl-2-C-methyl-D-erythritol kinase.